Consider the following 480-residue polypeptide: UDP-N-acetylmuramate--L-alanine ligase (480 aa).

Glycine 115 to threonine 121 is a binding site for ATP.

It belongs to the MurCDEF family.

The protein localises to the cytoplasm. It carries out the reaction UDP-N-acetyl-alpha-D-muramate + L-alanine + ATP = UDP-N-acetyl-alpha-D-muramoyl-L-alanine + ADP + phosphate + H(+). It functions in the pathway cell wall biogenesis; peptidoglycan biosynthesis. In terms of biological role, cell wall formation. The sequence is that of UDP-N-acetylmuramate--L-alanine ligase from Gluconacetobacter diazotrophicus (strain ATCC 49037 / DSM 5601 / CCUG 37298 / CIP 103539 / LMG 7603 / PAl5).